We begin with the raw amino-acid sequence, 447 residues long: Ribosomal protein uS12 methylthiotransferase RimO (447 aa).

The region spanning 15–125 (PRVGFVSLGC…VMQAIHRHLP (111 aa)) is the MTTase N-terminal domain. Positions 24, 60, 89, 156, 160, and 163 each coordinate [4Fe-4S] cluster. One can recognise a Radical SAM core domain in the interval 142-379 (LTPKHYAYLK…MQWQEEISKK (238 aa)). One can recognise a TRAM domain in the interval 379-447 (KRLAGKKGRI…GIHDLWAKKI (69 aa)).

Belongs to the methylthiotransferase family. RimO subfamily. [4Fe-4S] cluster is required as a cofactor.

The protein localises to the cytoplasm. It carries out the reaction L-aspartate(89)-[ribosomal protein uS12]-hydrogen + (sulfur carrier)-SH + AH2 + 2 S-adenosyl-L-methionine = 3-methylsulfanyl-L-aspartate(89)-[ribosomal protein uS12]-hydrogen + (sulfur carrier)-H + 5'-deoxyadenosine + L-methionine + A + S-adenosyl-L-homocysteine + 2 H(+). In terms of biological role, catalyzes the methylthiolation of an aspartic acid residue of ribosomal protein uS12. This chain is Ribosomal protein uS12 methylthiotransferase RimO, found in Nitrosomonas europaea (strain ATCC 19718 / CIP 103999 / KCTC 2705 / NBRC 14298).